The sequence spans 447 residues: Aladin (447 aa).

The tract at residues 49–69 is disordered; it reads STPSSLQENEGQENGDKASGE. WD repeat units lie at residues 97–138, 142–181, 210–250, and 252–291; these read LSEI…EPCI, DSQR…NMAL, QNDE…GTPI, and RGLG…SEPW.

As to quaternary structure, part of the nuclear pore complex (NPC). The NPC has an eight-fold symmetrical structure comprising a central transport channel and two rings, the cytoplasmic and nuclear rings, to which eight filaments are attached. The cytoplasmic filaments have loose ends, while the nuclear filaments are joined in a distal ring, forming a nuclear basket. NPCs are highly dynamic in configuration and composition, and can be devided in 3 subcomplexes, the NUP62 subcomplex, the NUP107-160 subcomplex and the NUP93 subcomplex, containing approximately 30 different nucleoporin proteins.

Its subcellular location is the nucleus envelope. It is found in the nucleus. The protein resides in the nuclear pore complex. This is Aladin from Arabidopsis thaliana (Mouse-ear cress).